We begin with the raw amino-acid sequence, 337 residues long: 15-cis-phytoene synthase (337 aa).

This sequence belongs to the phytoene/squalene synthase family. It depends on ATP as a cofactor. Mn(2+) serves as cofactor. Mg(2+) is required as a cofactor.

The catalysed reaction is 2 (2E,6E,10E)-geranylgeranyl diphosphate = 15-cis-phytoene + 2 diphosphate. It participates in carotenoid biosynthesis; phytoene biosynthesis. In terms of biological role, involved in the biosynthesis of carotenoids. Catalyzes the condensation of two molecules of geranylgeranyl diphosphate (GGPP) to give prephytoene diphosphate (PPPP) and the subsequent rearrangement of the cyclopropylcarbinyl intermediate to yield 15-cis-phytoene. This is 15-cis-phytoene synthase (crtB) from Synechocystis sp. (strain ATCC 27184 / PCC 6803 / Kazusa).